Consider the following 406-residue polypeptide: 3-phosphoshikimate 1-carboxyvinyltransferase (406 aa).

3-phosphoshikimate contacts are provided by Lys20, Ser21, and Arg25. Residue Lys20 participates in phosphoenolpyruvate binding. Residues Gly84 and Arg112 each coordinate phosphoenolpyruvate. 6 residues coordinate 3-phosphoshikimate: Ser155, Ser156, Gln157, Asp295, Gln317, and Lys321. Gln157 contacts phosphoenolpyruvate. Asp295 (proton acceptor) is an active-site residue. Phosphoenolpyruvate is bound by residues Arg325, Arg366, and Lys392.

Belongs to the EPSP synthase family. As to quaternary structure, monomer.

Its subcellular location is the cytoplasm. The enzyme catalyses 3-phosphoshikimate + phosphoenolpyruvate = 5-O-(1-carboxyvinyl)-3-phosphoshikimate + phosphate. The protein operates within metabolic intermediate biosynthesis; chorismate biosynthesis. In terms of biological role, catalyzes the transfer of the enolpyruvyl moiety of phosphoenolpyruvate (PEP) to the 5-hydroxyl of shikimate-3-phosphate (S3P) to produce enolpyruvyl shikimate-3-phosphate and inorganic phosphate. The chain is 3-phosphoshikimate 1-carboxyvinyltransferase from Pyrococcus furiosus (strain ATCC 43587 / DSM 3638 / JCM 8422 / Vc1).